We begin with the raw amino-acid sequence, 149 residues long: Protegrin-3 (149 aa).

The first 29 residues, M1–A29, serve as a signal peptide directing secretion. The propeptide occupies Q30–V130. The interval D61–V80 is disordered. 4 disulfide bridges follow: C85-C96, C107-C124, C136-C145, and C138-C143. R148 carries the arginine amide modification.

Belongs to the cathelicidin family.

The protein resides in the secreted. Its function is as follows. Microbicidal activity. Active against E.coli, Listeria monocytogenes and C.albicans, in vitro. This Sus scrofa (Pig) protein is Protegrin-3 (NPG3).